The primary structure comprises 258 residues: Glutamate racemase (258 aa).

Substrate-binding positions include 11 to 12 (DS) and 43 to 44 (YG). The active-site Proton donor/acceptor is the Cys74. Substrate is bound at residue 75–76 (NT). The Proton donor/acceptor role is filled by Cys182. 183–184 (TH) provides a ligand contact to substrate.

The protein belongs to the aspartate/glutamate racemases family.

It catalyses the reaction L-glutamate = D-glutamate. It functions in the pathway cell wall biogenesis; peptidoglycan biosynthesis. Provides the (R)-glutamate required for cell wall biosynthesis. In Leptospira borgpetersenii serovar Hardjo-bovis (strain JB197), this protein is Glutamate racemase.